A 479-amino-acid chain; its full sequence is Aspartyl/glutamyl-tRNA(Asn/Gln) amidotransferase subunit B (479 aa).

Belongs to the GatB/GatE family. GatB subfamily. Heterotrimer of A, B and C subunits.

It catalyses the reaction L-glutamyl-tRNA(Gln) + L-glutamine + ATP + H2O = L-glutaminyl-tRNA(Gln) + L-glutamate + ADP + phosphate + H(+). The catalysed reaction is L-aspartyl-tRNA(Asn) + L-glutamine + ATP + H2O = L-asparaginyl-tRNA(Asn) + L-glutamate + ADP + phosphate + 2 H(+). Its function is as follows. Allows the formation of correctly charged Asn-tRNA(Asn) or Gln-tRNA(Gln) through the transamidation of misacylated Asp-tRNA(Asn) or Glu-tRNA(Gln) in organisms which lack either or both of asparaginyl-tRNA or glutaminyl-tRNA synthetases. The reaction takes place in the presence of glutamine and ATP through an activated phospho-Asp-tRNA(Asn) or phospho-Glu-tRNA(Gln). This is Aspartyl/glutamyl-tRNA(Asn/Gln) amidotransferase subunit B from Streptococcus pyogenes serotype M4 (strain MGAS10750).